The chain runs to 46 residues: Denclatoxin-B (46 aa).

3 cysteine pairs are disulfide-bonded: cysteine 3–cysteine 40, cysteine 4–cysteine 32, and cysteine 16–cysteine 26.

It belongs to the plant thionin (TC 1.C.44) family.

Its subcellular location is the secreted. Functionally, thionins are small plant proteins which are toxic to animal cells. They seem to exert their toxic effect at the level of the cell membrane. Their precise function is not known. This is Denclatoxin-B from Dendrophthora clavata (Columbian mistletoe).